The following is a 328-amino-acid chain: LOB domain-containing protein 27 (328 aa).

The region spanning 35-136 (GACAACKYQR…EELKAVNSQL (102 aa)) is the LOB domain.

The protein belongs to the LOB domain-containing protein family.

This chain is LOB domain-containing protein 27 (LBD27), found in Arabidopsis thaliana (Mouse-ear cress).